The chain runs to 209 residues: Uracil phosphoribosyltransferase (209 aa).

Residues R79, R104, and D131–S139 each bind 5-phospho-alpha-D-ribose 1-diphosphate. Uracil is bound by residues I194 and G199–A201. Residue D200 coordinates 5-phospho-alpha-D-ribose 1-diphosphate.

This sequence belongs to the UPRTase family. Mg(2+) is required as a cofactor.

The enzyme catalyses UMP + diphosphate = 5-phospho-alpha-D-ribose 1-diphosphate + uracil. It participates in pyrimidine metabolism; UMP biosynthesis via salvage pathway; UMP from uracil: step 1/1. Its activity is regulated as follows. Allosterically activated by GTP. Functionally, catalyzes the conversion of uracil and 5-phospho-alpha-D-ribose 1-diphosphate (PRPP) to UMP and diphosphate. This chain is Uracil phosphoribosyltransferase, found in Levilactobacillus brevis (strain ATCC 367 / BCRC 12310 / CIP 105137 / JCM 1170 / LMG 11437 / NCIMB 947 / NCTC 947) (Lactobacillus brevis).